Here is a 94-residue protein sequence, read N- to C-terminus: Large ribosomal subunit protein uL23 (94 aa).

Belongs to the universal ribosomal protein uL23 family. In terms of assembly, part of the 50S ribosomal subunit. Contacts protein L29, and trigger factor when it is bound to the ribosome.

In terms of biological role, one of the early assembly proteins it binds 23S rRNA. One of the proteins that surrounds the polypeptide exit tunnel on the outside of the ribosome. Forms the main docking site for trigger factor binding to the ribosome. The protein is Large ribosomal subunit protein uL23 of Dehalococcoides mccartyi (strain ATCC BAA-2100 / JCM 16839 / KCTC 5957 / BAV1).